The chain runs to 101 residues: uncharacterized protein (101 aa).

This is an uncharacterized protein from Haemophilus influenzae (strain ATCC 51907 / DSM 11121 / KW20 / Rd).